The sequence spans 1505 residues: Probable serine/threonine-protein kinase DDB_G0280133 (1505 aa).

PAS domains are found at residues 2–72 (NTHN…FETG), 108–178 (RMFI…YHGG), and 215–284 (DMFK…TDSH). 2 disordered regions span residues 282–348 (DSHD…FNHS) and 398–533 (RVYG…ESSY). Composition is skewed to low complexity over residues 289-314 (QQQQ…TTST) and 328-344 (SSPP…TPTT). 2 stretches are compositionally biased toward basic and acidic residues: residues 398 to 407 (RVYGKDKDKN) and 415 to 430 (ENKD…ESKE). Residues 431-443 (HRHSKEKKKRKKD) show a composition bias toward basic residues. Residues 448-468 (NNNNNNNNNNNNNNEQTSDSS) show a composition bias toward low complexity. The segment covering 479–489 (SKKKRSSKKKS) has biased composition (basic residues). Residues 515–532 (SSNSSSNSSHSNAPHESS) show a composition bias toward low complexity. Residues 542–805 (YTLGKTLGRG…IMNVLNHPWL (264 aa)) enclose the Protein kinase domain. Residues 548-556 (LGRGNYGVV) and lysine 571 contribute to the ATP site. The Proton acceptor role is filled by aspartate 684. The segment covering 855 to 960 (NILNNNNNNN…NNTNSIINNN (106 aa)) has biased composition (low complexity). Disordered stretches follow at residues 855-1048 (NILN…SHQQ), 1072-1091 (QPNQ…QLQQ), and 1181-1358 (QQQQ…DEEN). Residues 903 to 939 (NNNNNINNNINNNNNVNNNVNNNKNNNNNNNNNSNNN) adopt a coiled-coil conformation. Residues 961–974 (LYNQSLSPQNNNIY) are compositionally biased toward polar residues. Low complexity-rich tracts occupy residues 975–1013 (QHSP…QQQH) and 1022–1048 (QQHQ…SHQQ). Residues 1072-1082 (QPNQQVSFDTN) show a composition bias toward polar residues. A coiled-coil region spans residues 1125-1189 (IQQIQQLQQQ…QQQQQQQQND (65 aa)). Over residues 1202–1271 (SKRDNSYNKR…NSRDNNRYNN (70 aa)) the composition is skewed to basic and acidic residues. Positions 1272–1282 (RDNNNNNNSNN) are enriched in low complexity. Basic and acidic residues-rich tracts occupy residues 1283–1301 (NRER…DYGK) and 1313–1326 (NKDK…KPDF). Residues 1331-1347 (SLKNDSSSNYGTISSGR) show a composition bias toward polar residues. The 65-residue stretch at 1399–1463 (FLFGRNRDIA…NGTFLKGEKI (65 aa)) folds into the FHA domain.

The protein belongs to the protein kinase superfamily. CAMK Ser/Thr protein kinase family. SNF1 subfamily.

The catalysed reaction is L-seryl-[protein] + ATP = O-phospho-L-seryl-[protein] + ADP + H(+). It carries out the reaction L-threonyl-[protein] + ATP = O-phospho-L-threonyl-[protein] + ADP + H(+). The polypeptide is Probable serine/threonine-protein kinase DDB_G0280133 (Dictyostelium discoideum (Social amoeba)).